Consider the following 194-residue polypeptide: Cytochrome c biogenesis ATP-binding export protein CcmA (194 aa).

In terms of domain architecture, ABC transporter spans 5-194 (LALDGVACIR…LDELVMGVLA (190 aa)). 37-44 (GPNGAGKS) is a binding site for ATP.

The protein belongs to the ABC transporter superfamily. CcmA exporter (TC 3.A.1.107) family. In terms of assembly, the complex is composed of two ATP-binding proteins (CcmA) and two transmembrane proteins (CcmB).

It localises to the cell inner membrane. It carries out the reaction heme b(in) + ATP + H2O = heme b(out) + ADP + phosphate + H(+). In terms of biological role, part of the ABC transporter complex CcmAB involved in the biogenesis of c-type cytochromes; once thought to export heme, this seems not to be the case, but its exact role is uncertain. Responsible for energy coupling to the transport system. This chain is Cytochrome c biogenesis ATP-binding export protein CcmA, found in Sphingopyxis alaskensis (strain DSM 13593 / LMG 18877 / RB2256) (Sphingomonas alaskensis).